Consider the following 179-residue polypeptide: Ribosome maturation factor RimM (179 aa).

Residues 101–179 form the PRC barrel domain; that stretch reads EGEVYVHDLC…VELMHRWILE (79 aa).

It belongs to the RimM family. In terms of assembly, binds ribosomal protein uS19.

The protein localises to the cytoplasm. An accessory protein needed during the final step in the assembly of 30S ribosomal subunit, possibly for assembly of the head region. Essential for efficient processing of 16S rRNA. May be needed both before and after RbfA during the maturation of 16S rRNA. It has affinity for free ribosomal 30S subunits but not for 70S ribosomes. In Treponema denticola (strain ATCC 35405 / DSM 14222 / CIP 103919 / JCM 8153 / KCTC 15104), this protein is Ribosome maturation factor RimM.